The sequence spans 345 residues: S-adenosylmethionine:tRNA ribosyltransferase-isomerase (345 aa).

Belongs to the QueA family. In terms of assembly, monomer.

The protein localises to the cytoplasm. The catalysed reaction is 7-aminomethyl-7-carbaguanosine(34) in tRNA + S-adenosyl-L-methionine = epoxyqueuosine(34) in tRNA + adenine + L-methionine + 2 H(+). Its pathway is tRNA modification; tRNA-queuosine biosynthesis. In terms of biological role, transfers and isomerizes the ribose moiety from AdoMet to the 7-aminomethyl group of 7-deazaguanine (preQ1-tRNA) to give epoxyqueuosine (oQ-tRNA). The polypeptide is S-adenosylmethionine:tRNA ribosyltransferase-isomerase (Helicobacter acinonychis (strain Sheeba)).